Here is a 221-residue protein sequence, read N- to C-terminus: Ribosomal RNA small subunit methyltransferase G (221 aa).

Residues glycine 89, leucine 94, 140–141 (VE), and arginine 154 contribute to the S-adenosyl-L-methionine site.

The protein belongs to the methyltransferase superfamily. RNA methyltransferase RsmG family.

The protein resides in the cytoplasm. The catalysed reaction is guanosine(527) in 16S rRNA + S-adenosyl-L-methionine = N(7)-methylguanosine(527) in 16S rRNA + S-adenosyl-L-homocysteine. Its function is as follows. Specifically methylates the N7 position of guanine in position 527 of 16S rRNA. This chain is Ribosomal RNA small subunit methyltransferase G, found in Methylibium petroleiphilum (strain ATCC BAA-1232 / LMG 22953 / PM1).